Reading from the N-terminus, the 249-residue chain is Phosphoadenosine 5'-phosphosulfate reductase (249 aa).

The active-site Nucleophile; cysteine thiosulfonate intermediate is the Cys230.

It belongs to the PAPS reductase family. CysH subfamily.

The protein localises to the cytoplasm. The catalysed reaction is [thioredoxin]-disulfide + sulfite + adenosine 3',5'-bisphosphate + 2 H(+) = [thioredoxin]-dithiol + 3'-phosphoadenylyl sulfate. It functions in the pathway sulfur metabolism; hydrogen sulfide biosynthesis; sulfite from sulfate: step 3/3. Functionally, catalyzes the formation of sulfite from phosphoadenosine 5'-phosphosulfate (PAPS) using thioredoxin as an electron donor. This chain is Phosphoadenosine 5'-phosphosulfate reductase, found in Synechocystis sp. (strain ATCC 27184 / PCC 6803 / Kazusa).